The chain runs to 354 residues: Protein-arginine kinase (354 aa).

Residues 24 to 254 form the Phosphagen kinase C-terminal domain; it reads IVLSSRIRLA…QQIIQQEKMA (231 aa). Residues 27–31, His-92, Arg-125, 176–180, and 207–212 contribute to the ATP site; these read SSRIR, RASVM, and RGIYGE. Positions 337 to 342 match the RDXXRA motif of the pArg binding pocket involved in allosteric regulation motif; it reads RDYRRA.

Belongs to the ATP:guanido phosphotransferase family.

It catalyses the reaction L-arginyl-[protein] + ATP = N(omega)-phospho-L-arginyl-[protein] + ADP + H(+). With respect to regulation, appears to be allosterically activated by the binding of pArg-containing polypeptides to the pArg-binding pocket localized in the C-terminal domain of McsB. In terms of biological role, catalyzes the specific phosphorylation of arginine residues in a large number of proteins. Is part of the bacterial stress response system. Protein arginine phosphorylation has a physiologically important role and is involved in the regulation of many critical cellular processes, such as protein homeostasis, motility, competence, and stringent and stress responses, by regulating gene expression and protein activity. The sequence is that of Protein-arginine kinase from Bacillus anthracis (strain A0248).